The chain runs to 119 residues: Iron-sulfur cluster insertion protein ErpA (119 aa).

Residues Cys47, Cys111, and Cys113 each coordinate iron-sulfur cluster.

It belongs to the HesB/IscA family. As to quaternary structure, homodimer. It depends on iron-sulfur cluster as a cofactor.

Required for insertion of 4Fe-4S clusters for at least IspG. In Alcanivorax borkumensis (strain ATCC 700651 / DSM 11573 / NCIMB 13689 / SK2), this protein is Iron-sulfur cluster insertion protein ErpA.